Reading from the N-terminus, the 59-residue chain is Large ribosomal subunit protein bL32B (59 aa).

This sequence belongs to the bacterial ribosomal protein bL32 family.

In Enterococcus faecalis (strain ATCC 700802 / V583), this protein is Large ribosomal subunit protein bL32B (rpmF2).